Here is a 99-residue protein sequence, read N- to C-terminus: Aspartyl/glutamyl-tRNA(Asn/Gln) amidotransferase subunit C (99 aa).

Belongs to the GatC family. As to quaternary structure, heterotrimer of A, B and C subunits.

It catalyses the reaction L-glutamyl-tRNA(Gln) + L-glutamine + ATP + H2O = L-glutaminyl-tRNA(Gln) + L-glutamate + ADP + phosphate + H(+). The enzyme catalyses L-aspartyl-tRNA(Asn) + L-glutamine + ATP + H2O = L-asparaginyl-tRNA(Asn) + L-glutamate + ADP + phosphate + 2 H(+). Functionally, allows the formation of correctly charged Asn-tRNA(Asn) or Gln-tRNA(Gln) through the transamidation of misacylated Asp-tRNA(Asn) or Glu-tRNA(Gln) in organisms which lack either or both of asparaginyl-tRNA or glutaminyl-tRNA synthetases. The reaction takes place in the presence of glutamine and ATP through an activated phospho-Asp-tRNA(Asn) or phospho-Glu-tRNA(Gln). The protein is Aspartyl/glutamyl-tRNA(Asn/Gln) amidotransferase subunit C of Orientia tsutsugamushi (strain Ikeda) (Rickettsia tsutsugamushi).